A 54-amino-acid chain; its full sequence is Large ribosomal subunit protein bL32 (54 aa).

The tract at residues 1–24 (MAVQKSKPTRSKRGMRRSHDSLKE) is disordered. Positions 7 to 16 (KPTRSKRGMR) are enriched in basic residues.

This sequence belongs to the bacterial ribosomal protein bL32 family.

This chain is Large ribosomal subunit protein bL32, found in Buchnera aphidicola subsp. Schizaphis graminum (strain Sg).